Here is a 279-residue protein sequence, read N- to C-terminus: Aspartate/glutamate leucyltransferase (279 aa).

Positions 245–279 (ARERGARPPRGPGALKDACDLPLSDAQPADIEDLD) are disordered.

It belongs to the R-transferase family. Bpt subfamily.

The protein resides in the cytoplasm. It catalyses the reaction N-terminal L-glutamyl-[protein] + L-leucyl-tRNA(Leu) = N-terminal L-leucyl-L-glutamyl-[protein] + tRNA(Leu) + H(+). It carries out the reaction N-terminal L-aspartyl-[protein] + L-leucyl-tRNA(Leu) = N-terminal L-leucyl-L-aspartyl-[protein] + tRNA(Leu) + H(+). Functions in the N-end rule pathway of protein degradation where it conjugates Leu from its aminoacyl-tRNA to the N-termini of proteins containing an N-terminal aspartate or glutamate. The chain is Aspartate/glutamate leucyltransferase from Caulobacter vibrioides (strain ATCC 19089 / CIP 103742 / CB 15) (Caulobacter crescentus).